The chain runs to 267 residues: Soluble interferon gamma receptor OPG193 (267 aa).

The signal sequence occupies residues 1-17 (MRYIIILAVLFINSIHA). N-linked (GlcNAc...) asparagine; by host glycans are attached at residues Asn42 and Asn150.

Belongs to the type II cytokine receptor family. Homodimer. Interacts with host IFNG.

The protein localises to the secreted. In terms of biological role, counteracts the antiviral effects of host IFN-gamma. Acts as a soluble IFN-gamma receptor and thus inhibits the interaction between host IFN-gamma and its receptor. This is Soluble interferon gamma receptor OPG193 (OPG193) from Cynomys gunnisoni (Gunnison's prairie dog).